Reading from the N-terminus, the 243-residue chain is 7-cyano-7-deazaguanine synthase (243 aa).

Residue 14–24 (FSGGQDSATCL) coordinates ATP. Zn(2+)-binding residues include C202, C217, C220, and C223.

Belongs to the QueC family. Requires Zn(2+) as cofactor.

It catalyses the reaction 7-carboxy-7-deazaguanine + NH4(+) + ATP = 7-cyano-7-deazaguanine + ADP + phosphate + H2O + H(+). It participates in purine metabolism; 7-cyano-7-deazaguanine biosynthesis. Catalyzes the ATP-dependent conversion of 7-carboxy-7-deazaguanine (CDG) to 7-cyano-7-deazaguanine (preQ(0)). The polypeptide is 7-cyano-7-deazaguanine synthase (Paraburkholderia phymatum (strain DSM 17167 / CIP 108236 / LMG 21445 / STM815) (Burkholderia phymatum)).